Reading from the N-terminus, the 513-residue chain is Gluconokinase (513 aa).

ATP-binding positions include Lys16, Thr261, Gly300, and Gly412–Ser416.

The protein belongs to the FGGY kinase family.

The catalysed reaction is D-gluconate + ATP = 6-phospho-D-gluconate + ADP + H(+). It participates in carbohydrate acid metabolism; D-gluconate degradation. With respect to regulation, catabolite repression by gluconate. This chain is Gluconokinase (gntK), found in Bacillus subtilis (strain 168).